Consider the following 450-residue polypeptide: Bifunctional apoptosis regulator (450 aa).

Positions M1 to G24 are disordered. Over M1 to R140 the chain is Cytoplasmic. The RING-type zinc-finger motif lies at C34 to R74. A helical transmembrane segment spans residues G141–V161. The Extracellular segment spans residues Y162–E331. One can recognise an SAM domain in the interval W182–L249. An N-linked (GlcNAc...) asparagine glycan is attached at N232. Residues F332–L352 traverse the membrane as a helical segment. Topologically, residues E353–R360 are cytoplasmic. The helical transmembrane segment at F361–W381 threads the bilayer. At S382–G404 the chain is on the extracellular side. Residues L405 to W425 form a helical membrane-spanning segment. The Cytoplasmic portion of the chain corresponds to A426 to F450.

Interacts with CASP8, BCL2 and BCL2L1 through SAM domain and also with HIP1, IFT57, ESRRBL1 and BCAP31. Interacts with NGFR; this interaction inhibits NF-kappa-B and JNK-related signaling pathways. Post-translationally, mediates RING-dependent self-ubiquitination leading to proteasomal degradation.

The protein resides in the endoplasmic reticulum membrane. It carries out the reaction S-ubiquitinyl-[E2 ubiquitin-conjugating enzyme]-L-cysteine + [acceptor protein]-L-lysine = [E2 ubiquitin-conjugating enzyme]-L-cysteine + N(6)-ubiquitinyl-[acceptor protein]-L-lysine.. Its function is as follows. Membrane-bound E3 ubiquitin ligase that plays a role in several processes including apoptosis regulation or reticulum endoplasmic stress. Has anti-apoptotic activity, both for apoptosis triggered via death-receptors and via mitochondrial factors. Contributes to the dynamic control of IRE1/ERN1 signaling during ER stress by inducing BAX inhibitor 1/TMBIM6 proteasomal degradation. Promotes the activation of TGF-beta signaling by mediating the 'Lys-63'-linked ubiquitination of TGFBR1 which is critical to activate the pathway. Together with NGFR, negatively regulates NF-kappa-B and JNK-related signaling pathways. Promotes the proteasome-mediated degradation of PNPLA3, a protein involveld in lipid metabolism. The protein is Bifunctional apoptosis regulator (Bfar) of Rattus norvegicus (Rat).